Consider the following 148-residue polypeptide: MAKREPKYFLVQEDILPEAILKTVMAKDLLLKGAANTVNEAVEKVDLSRSAFYKYKDKVFPFHQWSRGKIVTLALLMEHQPGVLSTVLNIIASVKGSILTINQNLPLQDMANATLSVETAEMNQDLEELLRIIGEVEGVREVRLVGQN.

An ACT domain is found at 72 to 147; it reads TLALLMEHQP…GVREVRLVGQ (76 aa).

It belongs to the UPF0735 family.

In Desulforamulus reducens (strain ATCC BAA-1160 / DSM 100696 / MI-1) (Desulfotomaculum reducens), this protein is UPF0735 ACT domain-containing protein Dred_1164.